The following is a 284-amino-acid chain: Probable protein phosphatase 2C 41 (284 aa).

A PPM-type phosphatase domain is found at 35-282 (SYGFYLVRGM…DDISCVVVRF (248 aa)). 4 residues coordinate Mn(2+): aspartate 72, glycine 73, aspartate 234, and aspartate 273.

The protein belongs to the PP2C family. The cofactor is Mg(2+). Mn(2+) serves as cofactor.

The catalysed reaction is O-phospho-L-seryl-[protein] + H2O = L-seryl-[protein] + phosphate. It carries out the reaction O-phospho-L-threonyl-[protein] + H2O = L-threonyl-[protein] + phosphate. The polypeptide is Probable protein phosphatase 2C 41 (Oryza sativa subsp. japonica (Rice)).